Consider the following 321-residue polypeptide: Agamous-like MADS-box protein AGL80 (321 aa).

The MADS-box domain occupies 1–61 (MTRKKVKLAY…DTNPEVWPSN (61 aa)). Residues 89 to 114 (FLKQRIAKATETLRRQRKDSRELEMT) are a coiled coil.

Interacts with AGL61 and AGL62. Forms a heterodimer with AGL61. Interacts with MEE14/CBP1. In terms of tissue distribution, expressed in the central cell of the female gametophyte and in early endosperm. Also detected in ovaries, young siliques, roots, leaves, stems, young flowers and anthers.

It is found in the nucleus. Functionally, probable transcription factor. Controls central cell differentiation during female gametophyte development. Required for the expression of DEMETER and DD46, but not for the expression of FIS2. Probable transcription factor that may function in the maintenance of the proper function of the central cell in pollen tube attraction. The sequence is that of Agamous-like MADS-box protein AGL80 (AGL80) from Arabidopsis thaliana (Mouse-ear cress).